A 211-amino-acid chain; its full sequence is Large ribosomal subunit protein uL4 (211 aa).

A disordered region spans residues 44-90 (ERQGTHSTLTKGEVRGGGKKPWRQKHTGKARTGSTRNPHWTGGGVVF). Positions 60 to 72 (GGKKPWRQKHTGK) are enriched in basic residues.

The protein belongs to the universal ribosomal protein uL4 family. In terms of assembly, part of the 50S ribosomal subunit.

Functionally, one of the primary rRNA binding proteins, this protein initially binds near the 5'-end of the 23S rRNA. It is important during the early stages of 50S assembly. It makes multiple contacts with different domains of the 23S rRNA in the assembled 50S subunit and ribosome. Forms part of the polypeptide exit tunnel. The protein is Large ribosomal subunit protein uL4 of Ureaplasma urealyticum serovar 10 (strain ATCC 33699 / Western).